The primary structure comprises 878 residues: Calcium-transporting ATPase 1 (878 aa).

A run of 4 helical transmembrane segments spans residues 50-72 (LFIDTLKDPMVIILLLVAFVQLF), 76-95 (FVESLVIFIVLMINSVVAVV), 243-263 (LGWVILALCALIFAVQILRLF), and 281-301 (FAVAVAVAAIPEALSSVVTIV). Ca(2+) is bound by residues Val-287, Ala-288, Ile-290, and Glu-292. Residue Asp-334 is the 4-aspartylphosphate intermediate of the active site. 6 helical membrane passes run 681-701 (LFSGNLGAIIAIVFALVVGWV), 704-724 (FTALQLLFINLVNDSVPAIAL), 753-773 (VILIRGSLIGIAAIISQYVGQ), 779-799 (MGVAMAFTTLILARTLQTFAA), 816-836 (YVLMAVTFCLALYSLTTLPFL), and 845-865 (AFGWSQWIVAAGLAVIAVICM). Ca(2+) contacts are provided by Asn-713 and Asp-717.

The protein belongs to the cation transport ATPase (P-type) (TC 3.A.3) family. Type IIA subfamily.

It localises to the cell membrane. It carries out the reaction Ca(2+)(in) + ATP + H2O = Ca(2+)(out) + ADP + phosphate + H(+). Inhibited by very high concentrations of cyclopiazonic acid (CPA). In terms of biological role, catalyzes the hydrolysis of ATP coupled with the transport of calcium. The chain is Calcium-transporting ATPase 1 (yoaB) from Lactococcus lactis subsp. lactis (strain IL1403) (Streptococcus lactis).